Here is an 821-residue protein sequence, read N- to C-terminus: Protein SCAR1 (821 aa).

3 disordered regions span residues Lys-168 to Arg-189, Thr-205 to Ser-289, and Thr-577 to Lys-625. Over residues Cys-206–Glu-225 the composition is skewed to polar residues. Residues Ile-226 to Lys-250 show a composition bias toward basic and acidic residues. Over residues Val-252–Ile-265 the composition is skewed to polar residues. The span at Ser-592–Gln-612 shows a compositional bias: low complexity. The WH2 domain occupies Glu-756–Val-774. A disordered region spans residues Gln-802–Thr-821. The segment covering Asp-807–Thr-821 has biased composition (acidic residues).

Belongs to the SCAR/WAVE family. As to quaternary structure, binds BRK1 and actin. Interacts with SPK1, ABI1 and ABI2. As to expression, expressed in expanding cotyledons, expanding leaves and expanding siliques containing developing embryos. Detected in unopened flower buds and in the expanding tip region of roots. Reduced expression in mature leaves and mature cotyledons.

It localises to the cytoplasm. The protein resides in the cytoskeleton. Functionally, involved in regulation of actin and microtubule organization. Part of a WAVE complex that activates the Arp2/3 complex. Regulates trichome branch positioning and expansion. This is Protein SCAR1 (SCAR1) from Arabidopsis thaliana (Mouse-ear cress).